Here is a 286-residue protein sequence, read N- to C-terminus: Probable glucose uptake protein GlcU (286 aa).

The next 10 helical transmembrane spans lie at 4–22 (IFLAILPAIFWGSIVLFNV), 27–49 (GPYSQTLGTTFGALIFSIVVYIF), 53–72 (VLTPTVIGVGVVSGLFWALG), 85–107 (VSRTMPISTGLQLVATTLFGVIV), 111–133 (WSTTISVVLGILALVCIIIGVIL), 154–176 (IVILLISTVGYLVYVVVIRLFNV), 181–198 (ALLPQAVGMVLGGILLTF), 211–228 (IIPGLIWAAGNMFLFISQ), 233–255 (VATSFSLSQMGIIISTLGGILIL), and 267–284 (IVVGIVFIIAAGIMLGIA).

This sequence belongs to the GRP transporter (TC 2.A.7.5) family.

The protein localises to the cell membrane. Involved in the uptake of glucose. This Bacillus cereus (strain ATCC 14579 / DSM 31 / CCUG 7414 / JCM 2152 / NBRC 15305 / NCIMB 9373 / NCTC 2599 / NRRL B-3711) protein is Probable glucose uptake protein GlcU (glcU).